A 270-amino-acid polypeptide reads, in one-letter code: Co-chaperone protein DjlA (270 aa).

Residues 1-6 (MQYWGK) are Periplasmic-facing. Residues 7 to 31 (IIGVAVALMMGGGFWGVVLGLLVGH) form a helical membrane-spanning segment. The Cytoplasmic segment spans residues 32-270 (MFDKARSRKM…ELIKEQKGFK (239 aa)). The J domain maps to 204–270 (DACNVLGVKT…ELIKEQKGFK (67 aa)).

As to quaternary structure, homodimer.

The protein resides in the cell inner membrane. Regulatory DnaK co-chaperone. Direct interaction between DnaK and DjlA is needed for the induction of the wcaABCDE operon, involved in the synthesis of a colanic acid polysaccharide capsule, possibly through activation of the RcsB/RcsC phosphotransfer signaling pathway. The colanic acid capsule may help the bacterium survive conditions outside the host. The chain is Co-chaperone protein DjlA from Salmonella paratyphi A (strain ATCC 9150 / SARB42).